The primary structure comprises 341 residues: Mitochondrial glutathione transporter SLC25A40 (341 aa).

3 Solcar repeats span residues 14–132 (ITPS…LRDI), 140–224 (RAEI…VKQS), and 234–328 (PTFA…GKSF). The next 6 membrane-spanning stretches (helical) occupy residues 20-40 (MIAS…LDVV), 104-124 (LWSG…IYFT), 143-163 (IASL…ISPL), 200-221 (WGPT…YELV), 236-256 (FAIS…VTLP), and 299-319 (GLFA…AIMI).

It belongs to the mitochondrial carrier (TC 2.A.29) family.

The protein localises to the mitochondrion inner membrane. The catalysed reaction is glutathione(in) = glutathione(out). Probable mitochondrial transporter required for glutathione import into mitochondria. Glutathione, which plays key roles in oxidative metabolism, is produced exclusively in the cytosol and is imported in many organelles. Mitochondrial glutathione is required for the activity and stability of proteins containing iron-sulfur clusters. This chain is Mitochondrial glutathione transporter SLC25A40, found in Xenopus tropicalis (Western clawed frog).